Reading from the N-terminus, the 59-residue chain is Large ribosomal subunit protein uL30 (59 aa).

Belongs to the universal ribosomal protein uL30 family. As to quaternary structure, part of the 50S ribosomal subunit.

This chain is Large ribosomal subunit protein uL30, found in Psychrobacter sp. (strain PRwf-1).